The sequence spans 270 residues: Undecaprenyl-diphosphatase 1 (270 aa).

7 helical membrane-spanning segments follow: residues 5 to 25 (YYVL…PIPI), 42 to 62 (IEGF…VLLI), 89 to 109 (FFFI…GVLF), 117 to 137 (LKGV…LWII), 192 to 212 (FSFL…ITDI), 220 to 240 (TLFV…YISL), and 250 to 270 (GNLK…LIFL).

This sequence belongs to the UppP family.

The protein localises to the cell membrane. The enzyme catalyses di-trans,octa-cis-undecaprenyl diphosphate + H2O = di-trans,octa-cis-undecaprenyl phosphate + phosphate + H(+). Its function is as follows. Catalyzes the dephosphorylation of undecaprenyl diphosphate (UPP). Confers resistance to bacitracin. In Bacillus cereus (strain ATCC 14579 / DSM 31 / CCUG 7414 / JCM 2152 / NBRC 15305 / NCIMB 9373 / NCTC 2599 / NRRL B-3711), this protein is Undecaprenyl-diphosphatase 1.